The chain runs to 79 residues: WAP four-disulfide core domain protein 10A (79 aa).

An N-terminal signal peptide occupies residues 1-21; that stretch reads MAPQTLLPVLVLCVLLLQAQG. Residues 34-79 enclose the WAP domain; sequence LSPEIKVCQQQPKLYLCKHLCESHRDCQANNICCSTYCGNVCMSIL. Intrachain disulfides connect C41–C67, C50–C71, C54–C66, and C60–C75.

The protein localises to the secreted. This chain is WAP four-disulfide core domain protein 10A (WFDC10A), found in Homo sapiens (Human).